We begin with the raw amino-acid sequence, 306 residues long: HORMA domain-containing protein 2 (306 aa).

One can recognise an HORMA domain in the interval His-29–Val-232.

As to quaternary structure, interacts with HORMAD1. In terms of processing, phosphorylated in a SPO11-dependent manner.

It localises to the nucleus. It is found in the chromosome. Functionally, essential for synapsis surveillance during meiotic prophase via the recruitment of ATR activity. Plays a key role in the male mid-pachytene checkpoint and the female meiotic prophase checkpoint: required for efficient build-up of ATR activity on unsynapsed chromosome regions, a process believed to form the basis of meiotic silencing of unsynapsed chromatin (MSUC) and meiotic prophase quality control in both sexes. Required for the DNA double-strand break-independent, BRCA1-dependent activation of ATR on the sex chromosomes that is essential for normal sex body formation. In Bos taurus (Bovine), this protein is HORMA domain-containing protein 2 (HORMAD2).